A 287-amino-acid polypeptide reads, in one-letter code: MLFMKMDLLNYQYLDKMNNNIGVLCYEGEASLRGEPRMQTLPVASALSSHRTGPPPISPSKRKFSMEPGDKDLDCENDHVSKMSRIFSPHLNKTVNGDCRRDPRERSRSPIERAAAPAVSLHGGHLYASLPSLMEQPLALTKNSSDTGRSAVERQQNRPSVITCASAGARNCNLSHCPIAHSGCSAPGSASYRRPPSATATCDPVVEEHFRRSLGKNYKEPEPAPNSVSITGSVDDHFAKALGDTWLQIKAAKDSASSSPESASRRGQPASPTAHMVSHSHSPSVVS.

Disordered stretches follow at residues 44-68 (ASAL…SMEP) and 251-287 (AAKD…SVVS). Phosphoserine occurs at positions 58 and 271. Residues 275–287 (HMVSHSHSPSVVS) are compositionally biased toward low complexity.

The protein belongs to the vestigial family. As to quaternary structure, interacts with TEFs. Interacts with IRF2BP2.

The protein localises to the nucleus. In terms of biological role, may act as a specific coactivator for the mammalian TEFs. The protein is Transcription cofactor vestigial-like protein 4 (Vgll4) of Mus musculus (Mouse).